A 60-amino-acid polypeptide reads, in one-letter code: Large ribosomal subunit protein bL32 (60 aa).

Belongs to the bacterial ribosomal protein bL32 family.

The polypeptide is Large ribosomal subunit protein bL32 (Streptococcus sanguinis (strain SK36)).